Reading from the N-terminus, the 246-residue chain is Flagellar L-ring protein (246 aa).

Positions 1–20 (MMQKCLSPKTLIAALVVLSA) are cleaved as a signal peptide. Cysteine 21 is lipidated: N-palmitoyl cysteine. A lipid anchor (S-diacylglycerol cysteine) is attached at cysteine 21.

This sequence belongs to the FlgH family. As to quaternary structure, the basal body constitutes a major portion of the flagellar organelle and consists of four rings (L,P,S, and M) mounted on a central rod.

The protein localises to the cell outer membrane. The protein resides in the bacterial flagellum basal body. Assembles around the rod to form the L-ring and probably protects the motor/basal body from shearing forces during rotation. This Ruegeria pomeroyi (strain ATCC 700808 / DSM 15171 / DSS-3) (Silicibacter pomeroyi) protein is Flagellar L-ring protein.